Here is a 78-residue protein sequence, read N- to C-terminus: Toxin BmTxKS4 (78 aa).

A signal peptide spans 1–21 (MKLKISFLILVLFSVFFAIEG). Residues 22-32 (IIKWFPASVNG) constitute a propeptide that is removed on maturation.

Post-translationally, contains 3 disulfide bonds. In terms of tissue distribution, expressed by the venom gland.

The protein resides in the secreted. Reversibly inhibits potassium channels. The polypeptide is Toxin BmTxKS4 (Olivierus martensii (Manchurian scorpion)).